We begin with the raw amino-acid sequence, 410 residues long: Methylamine dehydrogenase heavy chain (410 aa).

Positions 1-35 (MTHAYTKVRQALCYGSATLGAAALAALIAAGSAAA) are cleaved as a signal peptide.

The protein belongs to the aromatic amine dehydrogenase heavy chain family. As to quaternary structure, tetramer of two light and two heavy chains.

It is found in the periplasm. The catalysed reaction is 2 oxidized [amicyanin] + methylamine + H2O = 2 reduced [amicyanin] + formaldehyde + NH4(+) + 2 H(+). Methylamine dehydrogenase carries out the oxidation of methylamine. Electrons are passed from methylamine dehydrogenase to amicyanin. This chain is Methylamine dehydrogenase heavy chain (mauB), found in Methylorubrum extorquens (strain ATCC 14718 / DSM 1338 / JCM 2805 / NCIMB 9133 / AM1) (Methylobacterium extorquens).